We begin with the raw amino-acid sequence, 351 residues long: MTDSADTPQVELSEQGLNAAADAAEKAFAEAANLEELAAARREHLGDDAPIPAARRSLGSLPKDQRKDAGRLVNMARGRVEKRFAQVKAELERKRNEEVLRAERIDVTEPTTRGQRGAQHPITILSEQIADIFVGMGWEIADGPEVEAEYFNFDSLNFIPDHPARTLQDTFHIAPEGSGQVLRTHTSPVQMRTMLSRDLPIYIACPGRVFRTDELDATHTPVFHQVEGLAVDKGLTMAHLKGTLDHLAKTLFGEEAKTRIRPNYFPFTEPSAEVDVWFADKKGGAGWIEWGGCGMVNPNVLIAAGVDPEEYSGFAFGMGIERTLQFRNGLPDMRDMVEGDVRFTLPFGVRR.

Positions 45–69 (LGDDAPIPAARRSLGSLPKDQRKDA) are disordered. Glutamate 269 serves as a coordination point for Mg(2+).

It belongs to the class-II aminoacyl-tRNA synthetase family. Phe-tRNA synthetase alpha subunit type 1 subfamily. Tetramer of two alpha and two beta subunits. Mg(2+) is required as a cofactor.

The protein resides in the cytoplasm. It carries out the reaction tRNA(Phe) + L-phenylalanine + ATP = L-phenylalanyl-tRNA(Phe) + AMP + diphosphate + H(+). The sequence is that of Phenylalanine--tRNA ligase alpha subunit from Corynebacterium jeikeium (strain K411).